We begin with the raw amino-acid sequence, 372 residues long: Citrate/2-methylcitrate synthase (372 aa).

His188 contributes to the substrate binding site. His223 is a catalytic residue. 256-260 lines the CoA pocket; that stretch reads KIMGF. His262 is an active-site residue. Residue Arg272 participates in substrate binding. Asp314 is a catalytic residue. The substrate site is built by Arg339 and Arg358.

Belongs to the citrate synthase family.

It catalyses the reaction propanoyl-CoA + oxaloacetate + H2O = 2-methylcitrate + CoA + H(+). The enzyme catalyses oxaloacetate + acetyl-CoA + H2O = citrate + CoA + H(+). The protein operates within carbohydrate metabolism; tricarboxylic acid cycle; isocitrate from oxaloacetate: step 1/2. Involved in both the tricarboxylic acid (TCA) and methylcitric acid cycles. Has both 2-methylcitrate synthase and citrate synthase activities. Catalyzes the condensation of propionyl-CoA and oxaloacetate to yield 2-methylcitrate (2-MC) and CoA, and the condensation of acetyl-CoA and oxaloacetate to yield citrate and CoA. Has 2.3-fold higher activity as a 2-methylcitrate synthase. Catalyzes the formation of either (2S,3R)- or (2R,3S)-2-methylcitrate. In Bacillus subtilis (strain 168), this protein is Citrate/2-methylcitrate synthase.